Here is a 508-residue protein sequence, read N- to C-terminus: Pentatricopeptide repeat-containing protein At3g04130, mitochondrial (508 aa).

Residues 1–74 constitute a mitochondrion transit peptide; the sequence is MSWLIQNRIG…DSEDDVFKRL (74 aa). 10 PPR repeats span residues 120–150, 154–188, 189–219, 223–257, 258–292, 293–327, 328–363, 364–398, 400–434, and 436–470; these read SSDAYDMAVDILGKAKKWDRMKEFVERMRGD, TLNTVAKIMRRFAGAGEWEEAVGIFDRLGEFGLEK, NTESMNLLLDTLCKEKRVEQARVVLLQLKSH, NAHTFNIFIHGWCKANRVEEALWTIQEMKGHGFRP, CVISYTTIIRCYCQQFEFIKVYEMLSEMEANGSPP, NSITYTTIMSSLNAQKEFEEALRVATRMKRSGCKP, DSLFYNCLIHTLARAGRLEEAERVFRVEMPELGVSI, NTSTYNSMIAMYCHHDEEDKAIELLKEMESSNLCN, DVHTYQPLLRSCFKRGDVVEVGKLLKEMVTKHHLS, and DESTYTFLIQRLCRANMCEWAYCLFEEMISQDITP.

Belongs to the PPR family. P subfamily.

It localises to the mitochondrion. In Arabidopsis thaliana (Mouse-ear cress), this protein is Pentatricopeptide repeat-containing protein At3g04130, mitochondrial.